The sequence spans 215 residues: uncharacterized protein (215 aa).

The protein belongs to the mimivirus L31/R44 family.

This is an uncharacterized protein from Acanthamoeba polyphaga (Amoeba).